The primary structure comprises 340 residues: MRVLGIETSCDETGIAIYDDKAGLLANQLYSQIKLHADYGGVVPELASRDHIRKTVPLIQAALKEANLTAKDIDAVAYTAGPGLVGALLVGATIGRSLAFAWDVPAIPVHHMEGHLLAPMLEEKTPDFPFVALLVSGGHTQLISVTGIGEYTLLGESIDDAAGEAFDKTAKLLGLDYPGGPVLSKMAQQGVEGRFVFPRPMTDRPGLDFSFSGLKTFAANTIRQNDDSEQTRADIARAFEDAVVDTLAIKCRRALEQTGFKRLVMAGGVSANRTLRAKMAMIMEQLGGEVFYARPELCTDNGAMIALAGMIRFKGGTEGPLGVTVRPRWPLAELPALADK.

2 residues coordinate Fe cation: His111 and His115. Substrate-binding positions include 134–138, Asp167, Gly180, and Asn272; that span reads LVSGG. Asp300 provides a ligand contact to Fe cation.

This sequence belongs to the KAE1 / TsaD family. Fe(2+) is required as a cofactor.

It is found in the cytoplasm. The catalysed reaction is L-threonylcarbamoyladenylate + adenosine(37) in tRNA = N(6)-L-threonylcarbamoyladenosine(37) in tRNA + AMP + H(+). Its function is as follows. Required for the formation of a threonylcarbamoyl group on adenosine at position 37 (t(6)A37) in tRNAs that read codons beginning with adenine. Is involved in the transfer of the threonylcarbamoyl moiety of threonylcarbamoyl-AMP (TC-AMP) to the N6 group of A37, together with TsaE and TsaB. TsaD likely plays a direct catalytic role in this reaction. This is tRNA N6-adenosine threonylcarbamoyltransferase from Proteus mirabilis (strain HI4320).